The following is a 104-amino-acid chain: Pyrimidine/purine nucleoside phosphorylase (104 aa).

Belongs to the nucleoside phosphorylase PpnP family.

It catalyses the reaction a purine D-ribonucleoside + phosphate = a purine nucleobase + alpha-D-ribose 1-phosphate. It carries out the reaction adenosine + phosphate = alpha-D-ribose 1-phosphate + adenine. The enzyme catalyses cytidine + phosphate = cytosine + alpha-D-ribose 1-phosphate. The catalysed reaction is guanosine + phosphate = alpha-D-ribose 1-phosphate + guanine. It catalyses the reaction inosine + phosphate = alpha-D-ribose 1-phosphate + hypoxanthine. It carries out the reaction thymidine + phosphate = 2-deoxy-alpha-D-ribose 1-phosphate + thymine. The enzyme catalyses uridine + phosphate = alpha-D-ribose 1-phosphate + uracil. The catalysed reaction is xanthosine + phosphate = alpha-D-ribose 1-phosphate + xanthine. Its function is as follows. Catalyzes the phosphorolysis of diverse nucleosides, yielding D-ribose 1-phosphate and the respective free bases. Can use uridine, adenosine, guanosine, cytidine, thymidine, inosine and xanthosine as substrates. Also catalyzes the reverse reactions. The polypeptide is Pyrimidine/purine nucleoside phosphorylase (Janthinobacterium sp. (strain Marseille) (Minibacterium massiliensis)).